We begin with the raw amino-acid sequence, 284 residues long: NAD kinase (284 aa).

The active-site Proton acceptor is Asp-70. NAD(+) is bound by residues 70-71, 139-140, Lys-167, Asp-169, Leu-177, 180-185, and Gln-236; these read DG, NE, and TAYNLS.

The protein belongs to the NAD kinase family. A divalent metal cation is required as a cofactor.

The protein localises to the cytoplasm. The catalysed reaction is NAD(+) + ATP = ADP + NADP(+) + H(+). Functionally, involved in the regulation of the intracellular balance of NAD and NADP, and is a key enzyme in the biosynthesis of NADP. Catalyzes specifically the phosphorylation on 2'-hydroxyl of the adenosine moiety of NAD to yield NADP. The polypeptide is NAD kinase (Helicobacter pylori (strain P12)).